The chain runs to 187 residues: Cell division protein SepF (187 aa).

The interval 21 to 97 (EVEVPDKQQQ…ATPNNASQES (77 aa)) is disordered. Composition is skewed to polar residues over residues 38–63 (EQSQ…YTTT) and 70–97 (RMSN…SQES).

Belongs to the SepF family. As to quaternary structure, homodimer. Interacts with FtsZ.

The protein resides in the cytoplasm. Its function is as follows. Cell division protein that is part of the divisome complex and is recruited early to the Z-ring. Probably stimulates Z-ring formation, perhaps through the cross-linking of FtsZ protofilaments. Its function overlaps with FtsA. This Staphylococcus aureus (strain MRSA252) protein is Cell division protein SepF.